The primary structure comprises 93 residues: Small ribosomal subunit protein uS19 (93 aa).

It belongs to the universal ribosomal protein uS19 family.

Protein S19 forms a complex with S13 that binds strongly to the 16S ribosomal RNA. The sequence is that of Small ribosomal subunit protein uS19 from Campylobacter jejuni subsp. jejuni serotype O:6 (strain 81116 / NCTC 11828).